A 504-amino-acid polypeptide reads, in one-letter code: MELNNKEDSPRHTVPFVRQITEDGKAKLEIYRPTTNPIYIYTQILAAIAVSMGSMVVGFASAYTSPALVSMQNTTITSFKVTEQEASWVGGIMPLAGLAGGIAGGPFIEYLGRKNTILATAVPFIVAWLLIAFANSIWMVLAGRALSGFCVGIASLSLPVYLGETVQPEVRGTLGLLPTAFGNIGILICFVAGKYVNWSGLAFIGSILPIPFMVLTLLIPETPRWFVTRGREERARKALQWLRGKKADVEPELKGIVKSHCEAERHASQNAIFDLMKRSNLKPLLIALGLMFFQQLSGINAVIFYTVSIFKDAGSTIDENLCTIIVGVVNFGATFFATVLIDRLGRKILLYISEVAMVITLLTLGTFFYYKNSGNDVSNIGWLPLASFVIYVIGFSSGVGPIPWLMLGEILPGKIRGSAASVATGFNWTCTFIVTKTFADIVAAIGNHGAFWFFGVICLIGLFFVIFFVPETQGKSLEEIERKMMGRVRRMSSVANMKPLSFNM.

The Cytoplasmic segment spans residues 1–39; that stretch reads MELNNKEDSPRHTVPFVRQITEDGKAKLEIYRPTTNPIY. The helical transmembrane segment at 40–60 threads the bilayer; that stretch reads IYTQILAAIAVSMGSMVVGFA. Topologically, residues 61–87 are extracellular; the sequence is SAYTSPALVSMQNTTITSFKVTEQEAS. An N-linked (GlcNAc...) asparagine glycan is attached at asparagine 73. The helical transmembrane segment at 88–108 threads the bilayer; sequence WVGGIMPLAGLAGGIAGGPFI. Over 109 to 120 the chain is Cytoplasmic; that stretch reads EYLGRKNTILAT. A helical transmembrane segment spans residues 121-141; sequence AVPFIVAWLLIAFANSIWMVL. Topologically, residues 142-145 are extracellular; sequence AGRA. The chain crosses the membrane as a helical span at residues 146 to 166; the sequence is LSGFCVGIASLSLPVYLGETV. Topologically, residues 167-171 are cytoplasmic; sequence QPEVR. Residues 172-192 traverse the membrane as a helical segment; the sequence is GTLGLLPTAFGNIGILICFVA. Topologically, residues 193 to 199 are extracellular; the sequence is GKYVNWS. A glycan (N-linked (GlcNAc...) asparagine) is linked at asparagine 197. A helical membrane pass occupies residues 200–220; that stretch reads GLAFIGSILPIPFMVLTLLIP. Residues 221–283 lie on the Cytoplasmic side of the membrane; it reads ETPRWFVTRG…DLMKRSNLKP (63 aa). A helical transmembrane segment spans residues 284–304; that stretch reads LLIALGLMFFQQLSGINAVIF. Over 305–320 the chain is Extracellular; sequence YTVSIFKDAGSTIDEN. A helical membrane pass occupies residues 321-341; sequence LCTIIVGVVNFGATFFATVLI. Topologically, residues 342-347 are cytoplasmic; that stretch reads DRLGRK. Residues 348–368 traverse the membrane as a helical segment; sequence ILLYISEVAMVITLLTLGTFF. The Extracellular segment spans residues 369–387; that stretch reads YYKNSGNDVSNIGWLPLAS. Residues 388 to 408 traverse the membrane as a helical segment; it reads FVIYVIGFSSGVGPIPWLMLG. Residues 409 to 424 are Cytoplasmic-facing; sequence EILPGKIRGSAASVAT. The helical transmembrane segment at 425–445 threads the bilayer; the sequence is GFNWTCTFIVTKTFADIVAAI. The Extracellular portion of the chain corresponds to 446 to 448; that stretch reads GNH. The chain crosses the membrane as a helical span at residues 449 to 469; it reads GAFWFFGVICLIGLFFVIFFV. At 470 to 504 the chain is on the cytoplasmic side; sequence PETQGKSLEEIERKMMGRVRRMSSVANMKPLSFNM.

Belongs to the major facilitator superfamily. Sugar transporter (TC 2.A.1.1) family. Trehalose transporter subfamily. Highest expression in the fat body. Not expressed in other tissues including the midgut, muscle, and integuments after 24 hours of dehydration.

The protein resides in the cell membrane. In terms of biological role, high-capacity facilitative transporter for trehalose, required to induce anhydrobiosis. Anhydrobiotic larvae can survive almost complete dehydration. Does not transport maltose, sucrose or lactose. Mediates the bidirectional transfer of trehalose. Responsible for the transport of trehalose synthesized in the fat body and the incorporation of trehalose into other tissues that require a carbon source, thereby regulating trehalose levels in the hemolymph. This Polypedilum vanderplanki (Sleeping chironomid midge) protein is Facilitated trehalose transporter Tret1.